Here is a 335-residue protein sequence, read N- to C-terminus: Pyridoxal 5'-phosphate synthase subunit PdxS (335 aa).

D59 lines the D-ribose 5-phosphate pocket. K116 functions as the Schiff-base intermediate with D-ribose 5-phosphate in the catalytic mechanism. D-ribose 5-phosphate is bound at residue G188. K200 is a binding site for D-glyceraldehyde 3-phosphate. Residues G253 and 274–275 (GS) each bind D-ribose 5-phosphate.

It belongs to the PdxS/SNZ family. In the presence of PdxT, forms a dodecamer of heterodimers.

It catalyses the reaction aldehydo-D-ribose 5-phosphate + D-glyceraldehyde 3-phosphate + L-glutamine = pyridoxal 5'-phosphate + L-glutamate + phosphate + 3 H2O + H(+). Its pathway is cofactor biosynthesis; pyridoxal 5'-phosphate biosynthesis. Catalyzes the formation of pyridoxal 5'-phosphate from ribose 5-phosphate (RBP), glyceraldehyde 3-phosphate (G3P) and ammonia. The ammonia is provided by the PdxT subunit. Can also use ribulose 5-phosphate and dihydroxyacetone phosphate as substrates, resulting from enzyme-catalyzed isomerization of RBP and G3P, respectively. This is Pyridoxal 5'-phosphate synthase subunit PdxS from Hyperthermus butylicus (strain DSM 5456 / JCM 9403 / PLM1-5).